The sequence spans 90 residues: Large ribosomal subunit protein uL23c (90 aa).

Belongs to the universal ribosomal protein uL23 family. In terms of assembly, part of the 50S ribosomal subunit.

Its subcellular location is the plastid. It localises to the chloroplast. Its function is as follows. Binds to 23S rRNA. This is Large ribosomal subunit protein uL23c (rpl23) from Psilotum nudum (Whisk fern).